The chain runs to 439 residues: Tol-Pal system protein TolB (439 aa).

The signal sequence occupies residues 1 to 22; that stretch reads MTKFPRWLAMLVGLLFPLSALT.

The protein belongs to the TolB family. The Tol-Pal system is composed of five core proteins: the inner membrane proteins TolA, TolQ and TolR, the periplasmic protein TolB and the outer membrane protein Pal. They form a network linking the inner and outer membranes and the peptidoglycan layer.

It is found in the periplasm. Functionally, part of the Tol-Pal system, which plays a role in outer membrane invagination during cell division and is important for maintaining outer membrane integrity. The chain is Tol-Pal system protein TolB from Xylella fastidiosa (strain Temecula1 / ATCC 700964).